The sequence spans 1093 residues: Mediator of RNA polymerase II transcription subunit 14 (1093 aa).

Disordered stretches follow at residues 1–62 (MPGV…IDGH) and 1034–1065 (ETKS…ANDT). A compositionally biased stretch (polar residues) spans 19-31 (DTQTPSNGDNLRN). Residues 41 to 62 (KGDKDHDPDKESYAGKPRIDGH) show a composition bias toward basic and acidic residues. Residues 1040–1056 (DYSTQPAPENQSQTGAP) show a composition bias toward polar residues.

The protein belongs to the Mediator complex subunit 14 family. Component of the Mediator complex.

The protein resides in the nucleus. Component of the Mediator complex, a coactivator involved in the regulated transcription of nearly all RNA polymerase II-dependent genes. Mediator functions as a bridge to convey information from gene-specific regulatory proteins to the basal RNA polymerase II transcription machinery. Mediator is recruited to promoters by direct interactions with regulatory proteins and serves as a scaffold for the assembly of a functional preinitiation complex with RNA polymerase II and the general transcription factors. This is Mediator of RNA polymerase II transcription subunit 14 (rgr1) from Aspergillus fumigatus (strain ATCC MYA-4609 / CBS 101355 / FGSC A1100 / Af293) (Neosartorya fumigata).